A 179-amino-acid polypeptide reads, in one-letter code: ATP synthase subunit delta (179 aa).

This sequence belongs to the ATPase delta chain family. As to quaternary structure, F-type ATPases have 2 components, F(1) - the catalytic core - and F(0) - the membrane proton channel. F(1) has five subunits: alpha(3), beta(3), gamma(1), delta(1), epsilon(1). F(0) has three main subunits: a(1), b(2) and c(10-14). The alpha and beta chains form an alternating ring which encloses part of the gamma chain. F(1) is attached to F(0) by a central stalk formed by the gamma and epsilon chains, while a peripheral stalk is formed by the delta and b chains.

Its subcellular location is the cell inner membrane. In terms of biological role, f(1)F(0) ATP synthase produces ATP from ADP in the presence of a proton or sodium gradient. F-type ATPases consist of two structural domains, F(1) containing the extramembraneous catalytic core and F(0) containing the membrane proton channel, linked together by a central stalk and a peripheral stalk. During catalysis, ATP synthesis in the catalytic domain of F(1) is coupled via a rotary mechanism of the central stalk subunits to proton translocation. Its function is as follows. This protein is part of the stalk that links CF(0) to CF(1). It either transmits conformational changes from CF(0) to CF(1) or is implicated in proton conduction. The protein is ATP synthase subunit delta of Burkholderia vietnamiensis (strain G4 / LMG 22486) (Burkholderia cepacia (strain R1808)).